A 398-amino-acid polypeptide reads, in one-letter code: Nicotinate phosphoribosyltransferase (398 aa).

Position 214 is a phosphohistidine; by autocatalysis (H214).

This sequence belongs to the NAPRTase family. Post-translationally, transiently phosphorylated on a His residue during the reaction cycle. Phosphorylation strongly increases the affinity for substrates and increases the rate of nicotinate D-ribonucleotide production. Dephosphorylation regenerates the low-affinity form of the enzyme, leading to product release.

It carries out the reaction nicotinate + 5-phospho-alpha-D-ribose 1-diphosphate + ATP + H2O = nicotinate beta-D-ribonucleotide + ADP + phosphate + diphosphate. Its pathway is cofactor biosynthesis; NAD(+) biosynthesis; nicotinate D-ribonucleotide from nicotinate: step 1/1. Its function is as follows. Catalyzes the synthesis of beta-nicotinate D-ribonucleotide from nicotinate and 5-phospho-D-ribose 1-phosphate at the expense of ATP. This Xanthomonas campestris pv. campestris (strain 8004) protein is Nicotinate phosphoribosyltransferase.